The primary structure comprises 135 residues: Ribosome-binding factor A (135 aa).

The protein belongs to the RbfA family. In terms of assembly, monomer. Binds 30S ribosomal subunits, but not 50S ribosomal subunits or 70S ribosomes.

The protein localises to the cytoplasm. Functionally, one of several proteins that assist in the late maturation steps of the functional core of the 30S ribosomal subunit. Associates with free 30S ribosomal subunits (but not with 30S subunits that are part of 70S ribosomes or polysomes). Required for efficient processing of 16S rRNA. May interact with the 5'-terminal helix region of 16S rRNA. The protein is Ribosome-binding factor A of Hahella chejuensis (strain KCTC 2396).